A 186-amino-acid chain; its full sequence is Quinone reductase (186 aa).

FMN is bound by residues 13 to 20 (SLRKESYN), 80 to 83 (EHNR), and S116.

It belongs to the SsuE family. In terms of assembly, homotetramer. Dimer of dimers. The tetrameric configuration has a central role in chromate reductase activity. Requires FMN as cofactor.

The catalysed reaction is a quinone + NADH + H(+) = a quinol + NAD(+). It catalyses the reaction a quinone + NADPH + H(+) = a quinol + NADP(+). It carries out the reaction Cr(6+) + 2 NADH + O2 = Cr(3+) + superoxide + 2 NAD(+) + 2 H(+). The enzyme catalyses Cr(6+) + 2 NADPH + O2 = Cr(3+) + superoxide + 2 NADP(+) + 2 H(+). Its activity is regulated as follows. Non-competitively inhibited by sulfate. Catalyzes the reduction of quinones. Acts by simultaneous two-electron transfer, avoiding formation of highly reactive semiquinone intermediates and producing quinols that promote tolerance of H(2)O(2). Quinone reduction is probably the primary biological role of ChrR. Can also reduce toxic chromate to insoluble and less toxic Cr(3+). Catalyzes the transfer of three electrons to Cr(6+) producing Cr(3+) and one electron to molecular oxygen. This reaction produces transiently a minimal amount of the toxic Cr(5+) species and reactive oxygen species (ROS). Chromate reduction protects the cell against chromate toxicity, but is likely a secondary activity. The polypeptide is Quinone reductase (chrR) (Pseudomonas putida (Arthrobacter siderocapsulatus)).